A 326-amino-acid chain; its full sequence is 5-dehydro-2-deoxygluconokinase (326 aa).

It belongs to the carbohydrate kinase PfkB family.

It carries out the reaction 5-dehydro-2-deoxy-D-gluconate + ATP = 6-phospho-5-dehydro-2-deoxy-D-gluconate + ADP + H(+). It functions in the pathway polyol metabolism; myo-inositol degradation into acetyl-CoA; acetyl-CoA from myo-inositol: step 5/7. Functionally, catalyzes the phosphorylation of 5-dehydro-2-deoxy-D-gluconate (2-deoxy-5-keto-D-gluconate or DKG) to 6-phospho-5-dehydro-2-deoxy-D-gluconate (DKGP). The chain is 5-dehydro-2-deoxygluconokinase from Shouchella clausii (strain KSM-K16) (Alkalihalobacillus clausii).